A 209-amino-acid chain; its full sequence is A-type ATP synthase subunit D (209 aa).

This sequence belongs to the V-ATPase D subunit family. As to quaternary structure, has multiple subunits with at least A(3), B(3), C, D, E, F, H, I and proteolipid K(x).

It is found in the cell membrane. In terms of biological role, component of the A-type ATP synthase that produces ATP from ADP in the presence of a proton gradient across the membrane. This chain is A-type ATP synthase subunit D, found in Methanoregula boonei (strain DSM 21154 / JCM 14090 / 6A8).